A 157-amino-acid polypeptide reads, in one-letter code: S-ribosylhomocysteine lyase (157 aa).

Positions 54, 58, and 124 each coordinate Fe cation.

The protein belongs to the LuxS family. In terms of assembly, homodimer. The cofactor is Fe cation.

The enzyme catalyses S-(5-deoxy-D-ribos-5-yl)-L-homocysteine = (S)-4,5-dihydroxypentane-2,3-dione + L-homocysteine. Functionally, involved in the synthesis of autoinducer 2 (AI-2) which is secreted by bacteria and is used to communicate both the cell density and the metabolic potential of the environment. The regulation of gene expression in response to changes in cell density is called quorum sensing. Catalyzes the transformation of S-ribosylhomocysteine (RHC) to homocysteine (HC) and 4,5-dihydroxy-2,3-pentadione (DPD). The polypeptide is S-ribosylhomocysteine lyase (Lacticaseibacillus paracasei (strain ATCC 334 / BCRC 17002 / CCUG 31169 / CIP 107868 / KCTC 3260 / NRRL B-441) (Lactobacillus paracasei)).